A 312-amino-acid polypeptide reads, in one-letter code: Olfactory receptor 4K17 (312 aa).

Topologically, residues 1-25 (MKLLNQSQVSEFILLGLTSSQDVEF) are extracellular. N5 carries an N-linked (GlcNAc...) asparagine glycan. Residues 26 to 49 (LLFALFSVIYVVTVLGNLLIIVTV) traverse the membrane as a helical segment. At 50–57 (FNTPNLNT) the chain is on the cytoplasmic side. A helical membrane pass occupies residues 58-79 (PMYFLLGNLSFVDMTLASFATP). Over 80-100 (KVILNLLKKQKVISFAGCFTQ) the chain is Extracellular. C97 and C189 are oxidised to a cystine. The helical transmembrane segment at 101 to 120 (IFLLHLLGGVEMVLLVSMAF) threads the bilayer. At 121-139 (DRYVAICKPLHYMTIMNKK) the chain is on the cytoplasmic side. A helical transmembrane segment spans residues 140-158 (VCVLLVVTSWLLGLLHSGF). Residues 159–195 (QIPFAVNLPFCGPNVVDSIFCDLPLVTKLACIDIYFV) lie on the Extracellular side of the membrane. The chain crosses the membrane as a helical span at residues 196-219 (QVVIVANSGIISLSCFIILLISYS). The Cytoplasmic segment spans residues 220–235 (LILITIKNHSPTGQSK). A helical transmembrane segment spans residues 236-258 (ARSTLTAHITVVILFFGPCIFIY). At 259 to 269 (IWPFGNHSVDK) the chain is on the extracellular side. N264 carries an N-linked (GlcNAc...) asparagine glycan. The chain crosses the membrane as a helical span at residues 270 to 289 (FLAVFYTIITPILNPIIYTL). Topologically, residues 290-312 (RNKEMKISMKKLWRAFVNSREDT) are cytoplasmic.

This sequence belongs to the G-protein coupled receptor 1 family.

It is found in the cell membrane. In terms of biological role, odorant receptor. In Homo sapiens (Human), this protein is Olfactory receptor 4K17 (OR4K17).